A 109-amino-acid polypeptide reads, in one-letter code: Probable guanidinium efflux system subunit GdnC (109 aa).

Transmembrane regions (helical) follow at residues 3–23 (WGSV…LKHA), 26–46 (ALEW…LVKA), 55–75 (VYAV…IALF), and 81–101 (IAKL…KLVT).

The protein belongs to the drug/metabolite transporter (DMT) superfamily. Small multidrug resistance (SMR) (TC 2.A.7.1) family. YkkC/YkkD subfamily. As to quaternary structure, the efflux pump is composed of GdnC and GdnD.

Its subcellular location is the cell membrane. Its function is as follows. Probably involved in guanidinium transport. This chain is Probable guanidinium efflux system subunit GdnC, found in Bacillus licheniformis (strain ATCC 14580 / DSM 13 / JCM 2505 / CCUG 7422 / NBRC 12200 / NCIMB 9375 / NCTC 10341 / NRRL NRS-1264 / Gibson 46).